The sequence spans 176 residues: Transcription factor 21 (176 aa).

The disordered stretch occupies residues Met-1–Arg-84. Positions Gly-31–Glu-44 are enriched in polar residues. The region spanning Val-76–Leu-128 is the bHLH domain.

As to quaternary structure, efficient DNA binding requires dimerization with another bHLH protein. As to expression, expressed in the cranial paraxial mesoderm from 20 hpf and subsequently becomes restricted to the pharyngeal mesoderm that will form the muscle. Expression in the proepicardial organ is first seen at 40hpf in a cluster of cells between the myocardium and yolk. Also expressed in the developing arches. Expression begins to surround the heart by day 3 of development, and by 96 hpf, expression is restricted to the outer epicardial layer surrounding the myocardium.

It localises to the nucleus. In terms of biological role, involved in epithelial-mesenchymal interactions in kidney and lung morphogenesis that include epithelial differentiation and branching morphogenesis. This chain is Transcription factor 21, found in Danio rerio (Zebrafish).